A 1120-amino-acid polypeptide reads, in one-letter code: Phosphatidylinositide phosphatase SAC2 (1120 aa).

The 352-residue stretch at 167 to 518 (YKIFMDSDSF…GDTISRQYAG (352 aa)) folds into the SAC domain. The hSac2 domain occupies 593–760 (RGAQEQVSLL…RHSKPHEDIM (168 aa)). 2 disordered regions span residues 837 to 881 (SSLE…SREN) and 979 to 1008 (PAPK…LPRP). Residues 851 to 860 (LKDHGPHSEE) are compositionally biased toward basic and acidic residues. Composition is skewed to polar residues over residues 864–879 (DSDS…SGSR) and 998–1007 (SSHSQNQLPR).

It is found in the membrane. The protein localises to the clathrin-coated pit. The protein resides in the early endosome. It localises to the recycling endosome. It catalyses the reaction a myo-inositol phosphate + H2O = myo-inositol + phosphate. Inositol 4-phosphatase which mainly acts on phosphatidylinositol 4-phosphate. May be functionally linked to OCRL, which converts phosphatidylinositol 4,5-bisphosphate to phosphatidylinositol, for a sequential dephosphorylation of phosphatidylinositol 4,5-bisphosphate at the 5 and 4 position of inositol, thus playing an important role in the endocytic recycling. The polypeptide is Phosphatidylinositide phosphatase SAC2 (Danio rerio (Zebrafish)).